The chain runs to 142 residues: ATP synthase epsilon chain (142 aa).

This sequence belongs to the ATPase epsilon chain family. F-type ATPases have 2 components, CF(1) - the catalytic core - and CF(0) - the membrane proton channel. CF(1) has five subunits: alpha(3), beta(3), gamma(1), delta(1), epsilon(1). CF(0) has three main subunits: a, b and c.

The protein localises to the cell inner membrane. Produces ATP from ADP in the presence of a proton gradient across the membrane. The protein is ATP synthase epsilon chain of Shewanella denitrificans (strain OS217 / ATCC BAA-1090 / DSM 15013).